The chain runs to 1017 residues: Voltage-gated delayed rectifier potassium channel KCNH4 (1017 aa).

Topologically, residues 1 to 228 (MPVMKGLLAP…LLHYSVSKAI (228 aa)) are cytoplasmic. Residues 14 to 90 (FLDTIATRFD…QRLHKALEGH (77 aa)) form the PAS domain. Residues 93–145 (HRAEICFYRKDGSAFWCLLDMMPIKNEMGEVVLFLFSFKDITQSGSPGLGPQG) enclose the PAC domain. Residues 138–157 (SPGLGPQGGRGDSNHENSLG) are disordered. Residues 139–148 (PGLGPQGGRG) are compositionally biased toward gly residues. The chain crosses the membrane as a helical span at residues 229 to 249 (WDGLILLATFYVAVTVPYNVC). At 250-259 (FSGDDDTPIT) the chain is on the extracellular side. Residues 260–280 (SRHTLVSDIAVEMLFILDIIL) traverse the membrane as a helical segment. Topologically, residues 281 to 302 (NFRTTYVSQSGQVISAPRSIGL) are cytoplasmic. The helical transmembrane segment at 303–323 (HYLATWFFIDLIAALPFDLLY) threads the bilayer. Over 324–332 (IFNITVTSL) the chain is Extracellular. An N-linked (GlcNAc...) asparagine glycan is attached at N326. A helical; Voltage-sensor membrane pass occupies residues 333–353 (VHLLKTVRLLRLLRLLQKLER). At 354–361 (YSQCSAVV) the chain is on the cytoplasmic side. A helical membrane pass occupies residues 362 to 382 (LTLLMSVFALLAHWMACIWYV). Residues 383 to 427 (IGRREMEANDPLLWDIGWLHELGKRLEVPYVNGSVGGPSRRSAYI) are Extracellular-facing. N414 is a glycosylation site (N-linked (GlcNAc...) asparagine). Positions 428–448 (AALYFTLSSLTSVGFGNVCAN) form an intramembrane region, pore-forming. The Selectivity filter motif lies at 439 to 444 (SVGFGN). Residues 449–482 (TDAEKIFSICTMLIGALMHAVVFGNVTAIIQRMY) lie on the Extracellular side of the membrane. N473 carries N-linked (GlcNAc...) asparagine glycosylation. Residues 483 to 503 (SRRSLYHSRMKDLKDFIRVHR) form a helical membrane-spanning segment. Residues 504–1017 (LPRPLKQRML…SFQSRSDTFH (514 aa)) are Cytoplasmic-facing. The interval 556–620 (LFGAASRGCL…AILGKGDLIG (65 aa)) is cNMP-binding domain. The segment covering 691-724 (GSDTSGLSRFSRSPRLSQPRSESLGSSSDKTLPS) has biased composition (polar residues). Disordered regions lie at residues 691 to 749 (GSDT…LPNL), 772 to 803 (LVSSPSLSPSLSPALAGQGHSASPHGPPRCSA), 821 to 875 (PDLS…EAEE), and 971 to 1017 (LLDL…DTFH). The segment covering 772 to 787 (LVSSPSLSPSLSPALA) has biased composition (low complexity). Over residues 978–1002 (ILPPYPSEPDPLGPSPVPEASPPTP) the composition is skewed to pro residues. The span at 1008–1017 (SFQSRSDTFH) shows a compositional bias: polar residues.

Belongs to the potassium channel family. H (Eag) (TC 1.A.1.20) subfamily. Kv12.3/KCNH4 sub-subfamily. In terms of assembly, the potassium channel is probably composed of a homo- or heterotetrameric complex of pore-forming alpha subunits that can associate with modulating beta subunits. Detected only in brain, in particular in the telencephalon. Detected in putamen and caudate nucleus, and at lower levels in cerebral cortex, occipital and hippocampus.

The protein resides in the membrane. The enzyme catalyses K(+)(in) = K(+)(out). Functionally, pore-forming (alpha) subunit of a voltage-gated delayed rectifier. Activates at more negative voltages, exhibits fast prepulse-independent activation kinetics and deactivates much more slowly, but shows no inactivation. The polypeptide is Voltage-gated delayed rectifier potassium channel KCNH4 (Homo sapiens (Human)).